Here is a 30-residue protein sequence, read N- to C-terminus: Cyclotide hyen-D (30 aa).

A cross-link (cyclopeptide (Gly-Asn)) is located at residues 1–30 (GFPCGESCVYIPCFTAAIGCSCKSKVCYKN). 3 disulfides stabilise this stretch: C4/C20, C8/C22, and C13/C27.

This is a cyclic peptide. As to expression, detected in stems (at protein level).

In terms of biological role, probably participates in a plant defense mechanism. Has strong cytotoxic activity against HUVEC cells (LC(50)= 0.58 uM) and various cancer cells including HeLa (LC(50)= 0.48 uM), MCF-7 and K562. Also displays some hemolytic activity. Binds to and induces leakage in phospholipd membranes, particularly ones containing 1-palmitoyl-2-oleophosphatidylethanolamine (POPE). This is Cyclotide hyen-D from Pigea enneasperma (Spade flower).